The following is a 276-amino-acid chain: Glutamate 5-kinase (276 aa).

Lysine 14 contacts ATP. The substrate site is built by serine 54, aspartate 141, and asparagine 157. ATP is bound by residues 177 to 178 (SD) and 219 to 225 (TGGMLTK).

This sequence belongs to the glutamate 5-kinase family.

It localises to the cytoplasm. The catalysed reaction is L-glutamate + ATP = L-glutamyl 5-phosphate + ADP. It participates in amino-acid biosynthesis; L-proline biosynthesis; L-glutamate 5-semialdehyde from L-glutamate: step 1/2. In terms of biological role, catalyzes the transfer of a phosphate group to glutamate to form L-glutamate 5-phosphate. This is Glutamate 5-kinase from Listeria innocua serovar 6a (strain ATCC BAA-680 / CLIP 11262).